The sequence spans 215 residues: Probable transaldolase (215 aa).

The Schiff-base intermediate with substrate role is filled by Lys83.

The protein belongs to the transaldolase family. Type 3B subfamily.

It is found in the cytoplasm. The catalysed reaction is D-sedoheptulose 7-phosphate + D-glyceraldehyde 3-phosphate = D-erythrose 4-phosphate + beta-D-fructose 6-phosphate. It functions in the pathway carbohydrate degradation; pentose phosphate pathway; D-glyceraldehyde 3-phosphate and beta-D-fructose 6-phosphate from D-ribose 5-phosphate and D-xylulose 5-phosphate (non-oxidative stage): step 2/3. Transaldolase is important for the balance of metabolites in the pentose-phosphate pathway. The protein is Probable transaldolase of Methanococcus maripaludis (strain DSM 14266 / JCM 13030 / NBRC 101832 / S2 / LL).